We begin with the raw amino-acid sequence, 569 residues long: 2-succinyl-5-enolpyruvyl-6-hydroxy-3-cyclohexene-1-carboxylate synthase (569 aa).

It belongs to the TPP enzyme family. MenD subfamily. Homodimer. Mg(2+) serves as cofactor. Requires Mn(2+) as cofactor. The cofactor is thiamine diphosphate.

The enzyme catalyses isochorismate + 2-oxoglutarate + H(+) = 5-enolpyruvoyl-6-hydroxy-2-succinyl-cyclohex-3-ene-1-carboxylate + CO2. It participates in quinol/quinone metabolism; 1,4-dihydroxy-2-naphthoate biosynthesis; 1,4-dihydroxy-2-naphthoate from chorismate: step 2/7. The protein operates within quinol/quinone metabolism; menaquinone biosynthesis. Catalyzes the thiamine diphosphate-dependent decarboxylation of 2-oxoglutarate and the subsequent addition of the resulting succinic semialdehyde-thiamine pyrophosphate anion to isochorismate to yield 2-succinyl-5-enolpyruvyl-6-hydroxy-3-cyclohexene-1-carboxylate (SEPHCHC). In Paenarthrobacter aurescens (strain TC1), this protein is 2-succinyl-5-enolpyruvyl-6-hydroxy-3-cyclohexene-1-carboxylate synthase.